A 234-amino-acid polypeptide reads, in one-letter code: UPF0173 metal-dependent hydrolase RHE_CH01853 (234 aa).

This sequence belongs to the UPF0173 family.

In Rhizobium etli (strain ATCC 51251 / DSM 11541 / JCM 21823 / NBRC 15573 / CFN 42), this protein is UPF0173 metal-dependent hydrolase RHE_CH01853.